A 200-amino-acid polypeptide reads, in one-letter code: Phospholipase A2 inhibitor NAI (200 aa).

Residues Met1–Cys19 form the signal peptide. Disulfide bonds link Cys22–Cys46, Cys25–Cys32, Cys39–Cys67, Cys73–Cys94, Cys95–Cys100, Cys120–Cys145, Cys138–Cys165, and Cys171–Cys191.

The protein belongs to the CNF-like-inhibitor family. Heterotrimer of 2 subunits A and 1 subunit B; non-covalently linked. In terms of tissue distribution, expressed by the liver.

It localises to the secreted. In terms of biological role, inhibits the enzymatic activity of all phospholipase A2 tested, binding with micromole to nanomole affinity. The sequence is that of Phospholipase A2 inhibitor NAI from Notechis ater (Black tiger snake).